Reading from the N-terminus, the 614-residue chain is FAD-linked oxidoreductase ffsJ (614 aa).

Residues 1 to 19 (MRLTRALTPAILALPAAHA) form the signal peptide. N-linked (GlcNAc...) asparagine glycosylation is found at N30, N53, N72, and N114. In terms of domain architecture, FAD-binding PCMH-type spans 119-301 (TGSLPAYYID…LSSTHRVEPE (183 aa)). Residues N314, N329, N461, N465, N478, and N514 are each glycosylated (N-linked (GlcNAc...) asparagine). Positions 453 to 495 (NGHGRSNNNNSNNSSTSTSTSTSSKNGSVKPYAYGGKETTSST) are disordered. The span at 456-480 (GRSNNNNSNNSSTSTSTSTSSKNGS) shows a compositional bias: low complexity.

It belongs to the oxygen-dependent FAD-linked oxidoreductase family. The cofactor is FAD.

Its pathway is mycotoxin biosynthesis. Functionally, FAD-linked oxidoreductase; part of the gene cluster that mediates the biosynthesis of the cytotoxic leucine-containing cytochalasans, including aspochalasin C, aspochalasin E, TMC-169, flavichalasine F, aspergillin PZ, aspochalasin M and flavichalasine G. The first step in the pathway is catalyzed by the hybrid PKS-NRPS ffsA that utilizes 8 units of malonyl-CoA to iteratively assemble the octaketide chain before addition of L-leucine by the C-terminal NRPS modules. Because ffsA lacks a designated enoylreductase (ER) domain, the required activity is provided the enoyl reductase fssC. The methyltransferase (MT) domain of ffsA catalyzes the alpha-methylation at C10 and C14 using S-adenosyl-L-methionine as the methyl-donating cosubstrate. Reduction by the hydrolyase ffsE, followed by dehydration and intra-molecular Diels-Alder cyclization by the Diels-Alderase ffsF then yield the required isoindolone-fused macrocycle. A number of oxidative steps catalyzed by the tailoring cytochrome P450 monooxygenase ffsD, the FAD-linked oxidoreductase ffsJ and the short-chain dehydrogenase/reductase ffsI, are further required to afford the final products. The sequence is that of FAD-linked oxidoreductase ffsJ from Aspergillus flavipes.